The following is a 477-amino-acid chain: MPKTPNGKLDRKSIAALLLRNAKRDMNGVVNDVEKMTVREGELRLLWERVLPTLGDLRLGPSSDFFMCGGNSMLLMKLQKAIKETTGIRVSTKDLYESSTLRAMTHCVFDRANRADDDAAPIDWAVETSLPASLQTQIQDLATSSPPEAGGHGTNGTEVLLTGATSFLGSHLLRSLLSSPRVKKVHCVAVPADEQATLFSHDTRIVCYSGTLLSPTLGVTPQERRTLEQSVHVIVHAGAHGHCLNRFDSLRAPNLQSLHFLATLALPRCVTILFLSSSRVVLLSGDTAPAPASMRSYPPAVDGKDGYTASKWAGEVFLENLVAHVENVASSASSPSVFWRSSLNVEVHRACTLVSESAPNSDAMNAILRHSLDMRCAPRLERAEGYLDFAPMESIVAKITVHAVEMATAVQQQQQQQQRQSQPPRDDAADGSPTERARGLRIAITLAVSSRPWATLGRIWRGRMVGDPKNWIYKSGL.

The Carrier domain occupies 34 to 112 (EKMTVREGEL…AMTHCVFDRA (79 aa)). O-(pantetheine 4'-phosphoryl)serine is present on S72. The tract at residues 161-322 (LTGATSFLGS…AGEVFLENLV (162 aa)) is ketoreductase (KR) domain. Residues 410–435 (VQQQQQQQQRQSQPPRDDAADGSPTE) are disordered. Low complexity predominate over residues 411–422 (QQQQQQQQRQSQ). Over residues 424-435 (PRDDAADGSPTE) the composition is skewed to basic and acidic residues.

The protein operates within mycotoxin biosynthesis. Its function is as follows. Polyketide synthase-related protein; part of the gene cluster that mediates the biosynthesis of 10,11-dehydrocurvularin, a prevalent fungal phytotoxin with heat shock response and immune-modulatory activities. The highly reducing polyketide synthase Dhc3 is responsible for biosynthesis up to the tetraketide stage. The non-reducing polyketide synthase Dhc5 then conducts four additional chain extension cycles, producing the unreduced part of the nascent octaketide from C-1 to C-8 in 10,11-dehydrocurvularin. The role of Dhc1 in 10,11-dehydrocurvularin biosynthesis has not been identified yet. This chain is Polyketide synthase-related protein Dhc1, found in Alternaria cinerariae.